The chain runs to 872 residues: Valine--tRNA ligase (872 aa).

The 'HIGH' region signature appears at 46 to 56 (PNVTGKLHIGH). The 'KMSKS' region motif lies at 523-527 (KMSKS). K526 lines the ATP pocket. Residues 796–872 (IEIANDSFIN…KDKLKELTND (77 aa)) are a coiled coil.

This sequence belongs to the class-I aminoacyl-tRNA synthetase family. ValS type 1 subfamily. As to quaternary structure, monomer.

The protein resides in the cytoplasm. It catalyses the reaction tRNA(Val) + L-valine + ATP = L-valyl-tRNA(Val) + AMP + diphosphate. Catalyzes the attachment of valine to tRNA(Val). As ValRS can inadvertently accommodate and process structurally similar amino acids such as threonine, to avoid such errors, it has a 'posttransfer' editing activity that hydrolyzes mischarged Thr-tRNA(Val) in a tRNA-dependent manner. This Mycoplasma mycoides subsp. mycoides SC (strain CCUG 32753 / NCTC 10114 / PG1) protein is Valine--tRNA ligase.